Consider the following 575-residue polypeptide: Amino-acid acetyltransferase, mitochondrial (575 aa).

A mitochondrion-targeting transit peptide spans 1–35 (MSKLRNLNRQFISNLKTHETVTNAKRNLILSILKS). Residues 398–557 (FTLNNLVQDG…QGIPGGVNIH (160 aa)) enclose the N-acetyltransferase domain.

This sequence belongs to the acetyltransferase family.

The protein resides in the mitochondrion. It catalyses the reaction L-glutamate + acetyl-CoA = N-acetyl-L-glutamate + CoA + H(+). It participates in amino-acid biosynthesis; L-arginine biosynthesis; N(2)-acetyl-L-ornithine from L-glutamate: step 1/4. Functionally, N-acetylglutamate synthase involved in arginine biosynthesis. This chain is Amino-acid acetyltransferase, mitochondrial (ARG2), found in Debaryomyces hansenii (strain ATCC 36239 / CBS 767 / BCRC 21394 / JCM 1990 / NBRC 0083 / IGC 2968) (Yeast).